Consider the following 941-residue polypeptide: Cell wall protein IFF3 (941 aa).

Positions 1-20 (MQLFQNILVSIALLTQVVFA) are cleaved as a signal peptide. Asparagine 36, asparagine 367, asparagine 686, asparagine 732, asparagine 790, asparagine 818, asparagine 825, asparagine 884, and asparagine 917 each carry an N-linked (GlcNAc...) asparagine glycan. Asparagine 917 is lipidated: GPI-anchor amidated asparagine. Positions 918–941 (GSNKESIENIKYLTLVVFGLMMFM) are cleaved as a propeptide — removed in mature form.

The protein belongs to the HYR1/IFF family. The GPI-anchor is attached to the protein in the endoplasmic reticulum and serves to target the protein to the cell surface. There, the glucosamine-inositol phospholipid moiety is cleaved off and the GPI-modified mannoprotein is covalently attached via its lipidless GPI glycan remnant to the 1,6-beta-glucan of the outer cell wall layer.

Its subcellular location is the secreted. The protein localises to the cell wall. The protein resides in the membrane. In terms of biological role, GPI-anchored cell wall protein involved in cell wall organization, hyphal growth, as well as in host-fungal interaction and virulence. The chain is Cell wall protein IFF3 (IFF3) from Candida albicans (strain SC5314 / ATCC MYA-2876) (Yeast).